The primary structure comprises 437 residues: MSNDFMLEDDENYDFEFEDDDDDMIEPYVDVENCYYNSKSLKEENPESALTSFYSIVEKCEGEQNEWAFKALKQITKINFQLKKYDDMLQSYQRLLGYTNWLSITKNYSEKSIYNIVEYASSCENTEFLEKFYDVTTKALQNLNNERLMLKVLMHVARFLLTQKNYHKFKYLLRQMHELLSDENNSVADQNRGTHLLELYSLEIQMYSDIEDNKRLKELYQSSLRVKTAIPHPRIMGIIRECGGKMHMQENQWSEAQTNFFESFKSYDEAGSSDRIRVLKYLVLANMLSESEINPFDSPETQPYKDNPHIIAMTKLVEAYQIRDITAVERILQTYQHDILDDDFIRQYVDKILYSIRSQVLIELVKPYTSVKLSLLAKKLGVSISIIEQALVGLIIDERVNGKIDMVNEVFTISQPKNTIHNQLVEDVQKLWNTATK.

The region spanning 249 to 418 (QENQWSEAQT…EVFTISQPKN (170 aa)) is the PCI domain.

This sequence belongs to the CSN2 family. As to quaternary structure, component of the COP9 signalosome (CSN) complex composed of at least csn1, csn2, csn4 and csn5 subunits.

It is found in the cytoplasm. The protein localises to the nucleus. Its function is as follows. Component of the COP9 signalosome (CSN) complex that acts as an regulator of the ubiquitin (Ubl) conjugation pathway by mediating the deneddylation of the cullin subunit of SCF-type E3 ubiquitin-protein ligase complexes. Required, indirectly, for activation of ribonucleotide reductase through the degradation of the protein spd1, thereby supplying deoxyribonucleotides for DNA replication and repair. The sequence is that of COP9 signalosome complex subunit 2 (csn2) from Schizosaccharomyces pombe (strain 972 / ATCC 24843) (Fission yeast).